The chain runs to 195 residues: Small ribosomal subunit protein uS10c (195 aa).

The N-terminal 59 residues, 1–59, are a transit peptide targeting the chloroplast; sequence MATSSISAALLSPLTLRNASSSSTKQDFSTLSSLNLRRTLTPTLQSGHTLSNSSNFATF.

Belongs to the universal ribosomal protein uS10 family. Component of the chloroplast small ribosomal subunit (SSU). Mature 70S chloroplast ribosomes of higher plants consist of a small (30S) and a large (50S) subunit. The 30S small subunit contains 1 molecule of ribosomal RNA (16S rRNA) and 24 different proteins. The 50S large subunit contains 3 rRNA molecules (23S, 5S and 4.5S rRNA) and 33 different proteins.

Its subcellular location is the plastid. The protein localises to the chloroplast. Functionally, component of the chloroplast ribosome (chloro-ribosome), a dedicated translation machinery responsible for the synthesis of chloroplast genome-encoded proteins, including proteins of the transcription and translation machinery and components of the photosynthetic apparatus. The polypeptide is Small ribosomal subunit protein uS10c (RPS10) (Spinacia oleracea (Spinach)).